The following is a 258-amino-acid chain: Ubiquinone/menaquinone biosynthesis C-methyltransferase UbiE (258 aa).

A disordered region spans residues 1 to 21; that stretch reads MSESRTSADGGMETSYGFREV. S-adenosyl-L-methionine is bound by residues Thr-81, Asp-102, and 130–131; that span reads NA.

This sequence belongs to the class I-like SAM-binding methyltransferase superfamily. MenG/UbiE family.

The enzyme catalyses a 2-demethylmenaquinol + S-adenosyl-L-methionine = a menaquinol + S-adenosyl-L-homocysteine + H(+). It catalyses the reaction a 2-methoxy-6-(all-trans-polyprenyl)benzene-1,4-diol + S-adenosyl-L-methionine = a 5-methoxy-2-methyl-3-(all-trans-polyprenyl)benzene-1,4-diol + S-adenosyl-L-homocysteine + H(+). It functions in the pathway quinol/quinone metabolism; menaquinone biosynthesis; menaquinol from 1,4-dihydroxy-2-naphthoate: step 2/2. It participates in cofactor biosynthesis; ubiquinone biosynthesis. Methyltransferase required for the conversion of demethylmenaquinol (DMKH2) to menaquinol (MKH2) and the conversion of 2-polyprenyl-6-methoxy-1,4-benzoquinol (DDMQH2) to 2-polyprenyl-3-methyl-6-methoxy-1,4-benzoquinol (DMQH2). This Rhizobium johnstonii (strain DSM 114642 / LMG 32736 / 3841) (Rhizobium leguminosarum bv. viciae) protein is Ubiquinone/menaquinone biosynthesis C-methyltransferase UbiE.